Here is a 160-residue protein sequence, read N- to C-terminus: SsrA-binding protein (160 aa).

It belongs to the SmpB family.

The protein resides in the cytoplasm. Its function is as follows. Required for rescue of stalled ribosomes mediated by trans-translation. Binds to transfer-messenger RNA (tmRNA), required for stable association of tmRNA with ribosomes. tmRNA and SmpB together mimic tRNA shape, replacing the anticodon stem-loop with SmpB. tmRNA is encoded by the ssrA gene; the 2 termini fold to resemble tRNA(Ala) and it encodes a 'tag peptide', a short internal open reading frame. During trans-translation Ala-aminoacylated tmRNA acts like a tRNA, entering the A-site of stalled ribosomes, displacing the stalled mRNA. The ribosome then switches to translate the ORF on the tmRNA; the nascent peptide is terminated with the 'tag peptide' encoded by the tmRNA and targeted for degradation. The ribosome is freed to recommence translation, which seems to be the essential function of trans-translation. The protein is SsrA-binding protein of Rhodospirillum rubrum (strain ATCC 11170 / ATH 1.1.1 / DSM 467 / LMG 4362 / NCIMB 8255 / S1).